A 221-amino-acid polypeptide reads, in one-letter code: uncharacterized protein (221 aa).

Over residues 1 to 11 (MGEKSRRKGPA) the composition is skewed to basic residues. Disordered stretches follow at residues 1 to 23 (MGEK…GRTC) and 139 to 169 (SNFQ…SAPE). 2 stretches are compositionally biased toward basic and acidic residues: residues 13–23 (RHADGKLGRTC) and 155–168 (DKRS…RSAP).

This is an uncharacterized protein from Homo sapiens (Human).